The chain runs to 872 residues: DNA mismatch repair protein MutS (872 aa).

The span at 1–17 (MSISKIESVNAEKQSPV) shows a compositional bias: polar residues. The tract at residues 1 to 22 (MSISKIESVNAEKQSPVGTEIG) is disordered. 632 to 639 (GPNMGGKS) is an ATP binding site.

This sequence belongs to the DNA mismatch repair MutS family.

Its function is as follows. This protein is involved in the repair of mismatches in DNA. It is possible that it carries out the mismatch recognition step. This protein has a weak ATPase activity. This is DNA mismatch repair protein MutS from Azoarcus sp. (strain BH72).